Reading from the N-terminus, the 604-residue chain is Lipoprotein LpqB (604 aa).

Residues 1 to 27 (MTMRAARLSGSTGLTAALVAVLLVLTG) form the signal peptide. Cys-28 carries the N-palmitoyl cysteine lipid modification. Cys-28 carries the S-diacylglycerol cysteine lipid modification. Residues 35 to 60 (SAPQALGTIDREPTSEGPTPPIAGRD) form a disordered region.

It belongs to the LpqB lipoprotein family.

It localises to the cell membrane. In Nocardia farcinica (strain IFM 10152), this protein is Lipoprotein LpqB.